A 217-amino-acid polypeptide reads, in one-letter code: Enoyl-CoA-hydratase (217 aa).

Belongs to the enoyl-CoA hydratase/isomerase family.

The enzyme catalyses a (3S)-3-hydroxyacyl-CoA = a (2E)-enoyl-CoA + H2O. It carries out the reaction a 4-saturated-(3S)-3-hydroxyacyl-CoA = a (3E)-enoyl-CoA + H2O. Its pathway is antibiotic biosynthesis; vancomycin biosynthesis. Involved in the biosynthesis of the nonproteinogenic amino acid monomer (S)-3,5-dihydroxyphenylglycine (Dpg) responsible of the production of vancomycin and teicoplanin antibiotics. Catalyzes the syn-addition of a water molecule across the double bond of a trans-2-enoyl-CoA thioester, resulting in the formation of a beta-hydroxyacyl-CoA thioester. Physiologically, DpgB could act as a dehydratase, facilitating the aromatization of the DPA-S-DgpA or DPA-S-CoA intermediate. This is Enoyl-CoA-hydratase (dpgB) from Amycolatopsis orientalis (Nocardia orientalis).